We begin with the raw amino-acid sequence, 354 residues long: Ornithine carbamoyltransferase, catabolic (354 aa).

Residues 67-70 (STRT), Gln-94, Arg-118, and 145-148 (HPTQ) contribute to the carbamoyl phosphate site. L-ornithine is bound by residues Asn-177, Asp-241, and 245–246 (SM). Carbamoyl phosphate-binding positions include 284 to 285 (CL) and Arg-329.

The protein belongs to the aspartate/ornithine carbamoyltransferase superfamily. OTCase family.

The protein resides in the cytoplasm. The enzyme catalyses carbamoyl phosphate + L-ornithine = L-citrulline + phosphate + H(+). Its pathway is amino-acid degradation; L-arginine degradation via ADI pathway; carbamoyl phosphate from L-arginine: step 2/2. Its function is as follows. Reversibly catalyzes the transfer of the carbamoyl group from carbamoyl phosphate (CP) to the N(epsilon) atom of ornithine (ORN) to produce L-citrulline. In Lactococcus lactis subsp. lactis (strain IL1403) (Streptococcus lactis), this protein is Ornithine carbamoyltransferase, catabolic (arcB).